The following is a 100-amino-acid chain: ATP-dependent Clp protease adapter protein ClpS (100 aa).

It belongs to the ClpS family. In terms of assembly, binds to the N-terminal domain of the chaperone ClpA.

In terms of biological role, involved in the modulation of the specificity of the ClpAP-mediated ATP-dependent protein degradation. The polypeptide is ATP-dependent Clp protease adapter protein ClpS (Corynebacterium glutamicum (strain R)).